The sequence spans 498 residues: Pentatricopeptide repeat-containing protein At3g61360 (498 aa).

PPR repeat units lie at residues 102 to 132 (TSDS…VRKD), 138 to 172 (SFKS…IFRK), 175 to 205 (GVDE…LHSR), 209 to 243 (DVKT…GFKP), 244 to 278 (NSVT…DFDI), 279 to 313 (TVQI…GLTP), 314 to 348 (DCGA…GIEP), 349 to 385 (DSVT…SLVP), and 386 to 420 (KTPT…GYCP).

This sequence belongs to the PPR family. P subfamily.

The protein is Pentatricopeptide repeat-containing protein At3g61360 of Arabidopsis thaliana (Mouse-ear cress).